The chain runs to 262 residues: Type III pantothenate kinase (262 aa).

6 to 13 (DVGNTNAV) contributes to the ATP binding site. Substrate is bound by residues Y100 and 107–110 (GADR). Residue D109 is the Proton acceptor of the active site. Residue D129 participates in K(+) binding. An ATP-binding site is contributed by T132. Position 184 (T184) interacts with substrate.

The protein belongs to the type III pantothenate kinase family. In terms of assembly, homodimer. Requires NH4(+) as cofactor. It depends on K(+) as a cofactor.

It is found in the cytoplasm. It catalyses the reaction (R)-pantothenate + ATP = (R)-4'-phosphopantothenate + ADP + H(+). It functions in the pathway cofactor biosynthesis; coenzyme A biosynthesis; CoA from (R)-pantothenate: step 1/5. Its function is as follows. Catalyzes the phosphorylation of pantothenate (Pan), the first step in CoA biosynthesis. The sequence is that of Type III pantothenate kinase from Bacillus cereus (strain G9842).